A 241-amino-acid polypeptide reads, in one-letter code: uncharacterized protein (241 aa).

Residues 32-86 (LKKWRNLFNIQQIELAKYLNVSPSVISDYEVGRRKNPGVNIIKKYVLALIEIDKE) form the HTH cro/C1-type domain. The H-T-H motif DNA-binding region spans 43–62 (QIELAKYLNVSPSVISDYEV).

This is an uncharacterized protein from Methanocaldococcus jannaschii (strain ATCC 43067 / DSM 2661 / JAL-1 / JCM 10045 / NBRC 100440) (Methanococcus jannaschii).